The primary structure comprises 464 residues: Soluble pyridine nucleotide transhydrogenase (464 aa).

Residue 35–44 (DSRRQVGGNC) participates in FAD binding.

Belongs to the class-I pyridine nucleotide-disulfide oxidoreductase family. The cofactor is FAD.

The protein resides in the cytoplasm. The enzyme catalyses NAD(+) + NADPH = NADH + NADP(+). Conversion of NADPH, generated by peripheral catabolic pathways, to NADH, which can enter the respiratory chain for energy generation. This is Soluble pyridine nucleotide transhydrogenase from Pseudomonas entomophila (strain L48).